A 192-amino-acid chain; its full sequence is Ion-translocating oxidoreductase complex subunit A (192 aa).

6 helical membrane passes run 5-25 (LLLL…FLGL), 39-59 (IGMS…SYLV), 65-85 (LPFD…AVVV), 102-122 (ALGI…VALL), 134-154 (AIFG…FSAM), and 171-191 (AIAM…TGLV).

The protein belongs to the NqrDE/RnfAE family. The complex is composed of six subunits: RnfA, RnfB, RnfC, RnfD, RnfE and RnfG.

Its subcellular location is the cell inner membrane. Functionally, part of a membrane-bound complex that couples electron transfer with translocation of ions across the membrane. The chain is Ion-translocating oxidoreductase complex subunit A from Shewanella baltica (strain OS223).